The following is a 254-amino-acid chain: Probable glutathione transferase omega-2 (254 aa).

Positions 25 to 105 constitute a GST N-terminal domain; it reads GTIRIYNMRY…YLDDIYPEPR (81 aa). Cys35 functions as the Nucleophile in the catalytic mechanism. Residues Lys62, Val75, and 89 to 90 contribute to the glutathione site; that span reads ES. The GST C-terminal domain occupies 110-239; that stretch reads DHYEKVQQKL…SQPTETAVEF (130 aa).

Belongs to the GST superfamily. Omega family.

It catalyses the reaction RX + glutathione = an S-substituted glutathione + a halide anion + H(+). The enzyme catalyses L-dehydroascorbate + 2 glutathione = glutathione disulfide + L-ascorbate. The catalysed reaction is methylarsonate + 2 glutathione + H(+) = methylarsonous acid + glutathione disulfide + H2O. Its function is as follows. Exhibits glutathione-dependent thiol transferase activity. Has dehydroascorbate reductase activity and may contribute to the recycling of ascorbic acid. Participates in the biotransformation of inorganic arsenic and reduces monomethylarsonic acid (MMA). The sequence is that of Probable glutathione transferase omega-2 (gsto-2) from Caenorhabditis elegans.